The chain runs to 243 residues: MSYRVKRMLMLLVTGLFLSLSTFAASASAQTGGSFYEPFNNYNTGLWQKADGYSNGNMFNCTWRANNVSMTSLGEMRLSLTSPSYNKFDCGENRSVQTYGYGLYEVNMKPAKNVGIVSSFFTYTGPTDGTPWDEIDIEFLGKDTTKVQFNYYTNGVGNHEKIVNLGFDAANSYHTYAFDWQPNSIKWYVDGQLKHTATTQIPQTPGKIMMNLWNGAGVDEWLGSYNGVTPLSRSLHWVRYTKR.

Positions 1 to 27 are cleaved as a signal peptide; it reads MSYRVKRMLMLLVTGLFLSLSTFAASA. Residues 29–243 enclose the GH16 domain; that stretch reads AQTGGSFYEP…SLHWVRYTKR (215 aa). Cys-61 and Cys-90 form a disulfide bridge. Catalysis depends on Glu-134, which acts as the Nucleophile. The active-site Proton donor is the Glu-138.

This sequence belongs to the glycosyl hydrolase 16 family.

It catalyses the reaction Hydrolysis of (1-&gt;4)-beta-D-glucosidic linkages in beta-D-glucans containing (1-&gt;3)- and (1-&gt;4)-bonds.. The polypeptide is Beta-glucanase (bg1) (Bacillus licheniformis).